The sequence spans 146 residues: Acidic phospholipase A2 S14-72F (146 aa).

Positions 1-19 (MYPAHLLVLLAVCVSLLGA) are cleaved as a signal peptide. Residues 20–27 (ASIPPQPL) constitute a propeptide that is removed on maturation. Cystine bridges form between C38/C98, C54/C145, C56/C72, C71/C126, C78/C119, C87/C112, and C105/C117. Residues Y55, G57, and G59 each contribute to the Ca(2+) site. The active site involves H75. D76 lines the Ca(2+) pocket. D120 is a catalytic residue.

The protein belongs to the phospholipase A2 family. Group I subfamily. D49 sub-subfamily. The cofactor is Ca(2+). As to expression, expressed by the venom gland.

It is found in the secreted. The catalysed reaction is a 1,2-diacyl-sn-glycero-3-phosphocholine + H2O = a 1-acyl-sn-glycero-3-phosphocholine + a fatty acid + H(+). Snake venom phospholipase A2 (PLA2) that inhibits collagen-induced platelet aggregation. PLA2 catalyzes the calcium-dependent hydrolysis of the 2-acyl groups in 3-sn-phosphoglycerides. This Austrelaps superbus (Lowland copperhead snake) protein is Acidic phospholipase A2 S14-72F.